Here is a 703-residue protein sequence, read N- to C-terminus: Prolyl 3-hydroxylase 2 (703 aa).

The first 21 residues, 1-21 (MRESTWVSLLLLLLLPAPQRG), serve as a signal peptide directing secretion. The segment at 18–40 (PQRGGPQDGRGSPEPEPERGPLQ) is disordered. TPR repeat units lie at residues 42-75 (FDLL…HRRL), 144-177 (RVPY…NPEH), 205-238 (HLES…YFNE), and 301-334 (PLHY…HPDD). N-linked (GlcNAc...) asparagine glycosylation is found at Asn444, Asn455, and Asn544. One can recognise a Fe2OG dioxygenase domain in the interval 552–666 (THMVCRTALS…RCAVALWFTL (115 aa)). 3 residues coordinate Fe cation: His575, Asp577, and His647. Residue Arg657 is part of the active site. Positions 700–703 (KDEL) match the Prevents secretion from ER motif.

The protein belongs to the leprecan family. Requires Fe cation as cofactor. It depends on L-ascorbate as a cofactor. In terms of tissue distribution, detected at low levels in cartilage.

It is found in the endoplasmic reticulum. It localises to the sarcoplasmic reticulum. The protein resides in the golgi apparatus. The catalysed reaction is L-prolyl-[collagen] + 2-oxoglutarate + O2 = trans-3-hydroxy-L-prolyl-[collagen] + succinate + CO2. Functionally, prolyl 3-hydroxylase that catalyzes the post-translational formation of 3-hydroxyproline on collagens. Contributes to proline 3-hydroxylation of collagen COL4A1 and COL1A1 in tendons, the eye sclera and in the eye lens capsule. Has high activity with the type IV collagen COL4A1, and lower activity with COL1A1. Catalyzes hydroxylation of the first Pro in Gly-Pro-Hyp sequences where Hyp is 4-hydroxyproline. Has no activity on substrates that lack 4-hydroxyproline in the third position. The polypeptide is Prolyl 3-hydroxylase 2 (Rattus norvegicus (Rat)).